Consider the following 420-residue polypeptide: Serine hydroxymethyltransferase (420 aa).

Residues L123 and 127–129 (GHL) each bind (6S)-5,6,7,8-tetrahydrofolate. An N6-(pyridoxal phosphate)lysine modification is found at K232. Position 357–359 (357–359 (SPF)) interacts with (6S)-5,6,7,8-tetrahydrofolate.

Belongs to the SHMT family. In terms of assembly, homodimer. Pyridoxal 5'-phosphate is required as a cofactor.

It localises to the cytoplasm. The catalysed reaction is (6R)-5,10-methylene-5,6,7,8-tetrahydrofolate + glycine + H2O = (6S)-5,6,7,8-tetrahydrofolate + L-serine. It participates in one-carbon metabolism; tetrahydrofolate interconversion. The protein operates within amino-acid biosynthesis; glycine biosynthesis; glycine from L-serine: step 1/1. In terms of biological role, catalyzes the reversible interconversion of serine and glycine with tetrahydrofolate (THF) serving as the one-carbon carrier. This reaction serves as the major source of one-carbon groups required for the biosynthesis of purines, thymidylate, methionine, and other important biomolecules. Also exhibits THF-independent aldolase activity toward beta-hydroxyamino acids, producing glycine and aldehydes, via a retro-aldol mechanism. The protein is Serine hydroxymethyltransferase of Streptococcus pyogenes serotype M4 (strain MGAS10750).